The primary structure comprises 176 residues: Ribosome maturation factor RimM (176 aa).

Residues Glu-101 to Leu-174 enclose the PRC barrel domain.

Belongs to the RimM family. As to quaternary structure, binds ribosomal protein uS19.

Its subcellular location is the cytoplasm. Its function is as follows. An accessory protein needed during the final step in the assembly of 30S ribosomal subunit, possibly for assembly of the head region. Essential for efficient processing of 16S rRNA. May be needed both before and after RbfA during the maturation of 16S rRNA. It has affinity for free ribosomal 30S subunits but not for 70S ribosomes. The chain is Ribosome maturation factor RimM from Moorella thermoacetica (strain ATCC 39073 / JCM 9320).